The sequence spans 304 residues: uncharacterized protein (304 aa).

The N-terminal stretch at 1 to 25 (MVKTAMLGAVALVIALGGTCGVADA) is a signal peptide. Residues 34 to 303 (PMIVAHRAGT…DSPLAAQQWR (270 aa)) form the GP-PDE domain.

This is an uncharacterized protein from Mycobacterium tuberculosis (strain CDC 1551 / Oshkosh).